We begin with the raw amino-acid sequence, 225 residues long: Reticulon-like protein B9 (225 aa).

In terms of domain architecture, Reticulon spans 39 to 224; the sequence is VADILLWREP…PRGTVKNKKF (186 aa). Helical transmembrane passes span 50 to 70, 72 to 92, and 152 to 172; these read IAAT…VVEY, FITL…IWST, and YIVS…IGFV.

The protein resides in the endoplasmic reticulum membrane. The protein is Reticulon-like protein B9 (RTNLB9) of Arabidopsis thaliana (Mouse-ear cress).